Reading from the N-terminus, the 568-residue chain is Urease subunit alpha (568 aa).

One can recognise a Urease domain in the interval 130-568 (GGIDTHIHFI…LPMAQRYFLF (439 aa)). Ni(2+)-binding residues include His-135, His-137, and Lys-218. N6-carboxylysine is present on Lys-218. His-220 contributes to the substrate binding site. Ni(2+)-binding residues include His-247 and His-273. His-321 (proton donor) is an active-site residue. Asp-361 contacts Ni(2+).

This sequence belongs to the metallo-dependent hydrolases superfamily. Urease alpha subunit family. In terms of assembly, heterotrimer of UreA (gamma), UreB (beta) and UreC (alpha) subunits. Three heterotrimers associate to form the active enzyme. Ni cation is required as a cofactor. Post-translationally, carboxylation allows a single lysine to coordinate two nickel ions.

It localises to the cytoplasm. The catalysed reaction is urea + 2 H2O + H(+) = hydrogencarbonate + 2 NH4(+). The protein operates within nitrogen metabolism; urea degradation; CO(2) and NH(3) from urea (urease route): step 1/1. In Burkholderia multivorans (strain ATCC 17616 / 249), this protein is Urease subunit alpha.